Consider the following 250-residue polypeptide: UPF0524 protein C3orf70 homolog (250 aa).

Residues 201-250 (ESCDEDTEEGAELSSEEDYSPESSWEPDECTLLSPSQSDLEVIETIETTV) form a disordered region. Over residues 202–229 (SCDEDTEEGAELSSEEDYSPESSWEPDE) the composition is skewed to acidic residues.

The protein belongs to the UPF0524 family.

May play a role in neuronal and neurobehavioral development. This Bos taurus (Bovine) protein is UPF0524 protein C3orf70 homolog.